We begin with the raw amino-acid sequence, 215 residues long: 3-isopropylmalate dehydratase small subunit (215 aa).

It belongs to the LeuD family. LeuD type 1 subfamily. As to quaternary structure, heterodimer of LeuC and LeuD.

It catalyses the reaction (2R,3S)-3-isopropylmalate = (2S)-2-isopropylmalate. Its pathway is amino-acid biosynthesis; L-leucine biosynthesis; L-leucine from 3-methyl-2-oxobutanoate: step 2/4. Its function is as follows. Catalyzes the isomerization between 2-isopropylmalate and 3-isopropylmalate, via the formation of 2-isopropylmaleate. The chain is 3-isopropylmalate dehydratase small subunit from Hahella chejuensis (strain KCTC 2396).